Consider the following 273-residue polypeptide: Cyclic di-AMP synthase CdaA (273 aa).

3 helical membrane passes run 12-32, 40-60, and 61-81; these read LGNA…IMVI, LLKG…LGLS, and TLQW…IIIF. Residues 82 to 242 enclose the DAC domain; sequence QPELRRALEQ…NGDLHRELTE (161 aa).

It belongs to the adenylate cyclase family. DacA/CdaA subfamily. In terms of assembly, probably a homodimer. Interacts with CdaR. May interact with GlmM.

Its subcellular location is the cell membrane. The catalysed reaction is 2 ATP = 3',3'-c-di-AMP + 2 diphosphate. With respect to regulation, DAC activity is stimulated about 20-fold in E.coli by coexpression with CdaR. Its function is as follows. One of 3 paralogous diadenylate cyclases (DAC) in this bacteria, catalyzing the condensation of 2 ATP molecules into cyclic di-AMP (c-di-AMP). Upon expression in E.coli leads to c-di-AMP synthesis. Probably the main producer of c-di-AMP for the cell; is probably implicated in control of peptidoglycan synthesis. In B.subtilis c-di-AMP is a second messenger that mediates growth, DNA repair and cell wall homeostasis; it is toxic when present in excess. This is Cyclic di-AMP synthase CdaA from Bacillus subtilis (strain 168).